Here is a 576-residue protein sequence, read N- to C-terminus: Putative export ATP-binding/permease protein RF_0214 (576 aa).

The ABC transmembrane type-1 domain maps to 20-303; the sequence is LIIVMISLLS…IFELLSEIHL (284 aa). Helical transmembrane passes span 21–41, 61–81, 135–155, 158–178, 242–262, and 277–297; these read IIVM…GSVF, ILYI…RSYF, FLSF…LMFF, FKLA…LIKF, ALFF…VVWI, and IISF…IFEL. An ABC transporter domain is found at 336 to 572; that stretch reads IEFKNVDFTY…SEIYRNICRE (237 aa). Position 371–378 (371–378) interacts with ATP; sequence GRSGGGKS.

The protein belongs to the ABC transporter superfamily. Homodimer.

The protein resides in the cell inner membrane. In terms of biological role, part of an ABC transporter complex. Transmembrane domains (TMD) form a pore in the inner membrane and the ATP-binding domain (NBD) is responsible for energy generation. This Rickettsia felis (strain ATCC VR-1525 / URRWXCal2) (Rickettsia azadi) protein is Putative export ATP-binding/permease protein RF_0214.